The chain runs to 118 residues: Nitrogenase-stabilizing/protective protein NifW (118 aa).

Belongs to the NifW family. Homotrimer; associates with NifD.

Functionally, may protect the nitrogenase Fe-Mo protein from oxidative damage. This Rhodopseudomonas palustris (strain BisB5) protein is Nitrogenase-stabilizing/protective protein NifW.